Reading from the N-terminus, the 260-residue chain is Thymidylate synthase (260 aa).

The protein operates within pyrimidine metabolism; dTTP biosynthesis. Is able to catalyze the biosynthesis of dTMP using dUMP, tetrahydrofolate and formaldehyde in vitro, i.e. a reaction equivalent to that catalyzed by bacterial thymidylate synthases (EC 2.1.1.45). However, M.jannaschii like most methanogenic Archaea lacks folates, thus the physiological cosubstrate is unknown but is likely one of the non-methylated methanopterin biosynthetic intermediates. This chain is Thymidylate synthase, found in Methanocaldococcus jannaschii (strain ATCC 43067 / DSM 2661 / JAL-1 / JCM 10045 / NBRC 100440) (Methanococcus jannaschii).